We begin with the raw amino-acid sequence, 454 residues long: Probable succinate-semialdehyde dehydrogenase [NADP(+)] (454 aa).

NADP(+) is bound by residues 130–131, 154–157, and 206–207; these read WN, KHAS, and GS. Residue Glu228 is the Proton acceptor of the active site. Leu229 contributes to the NADP(+) binding site. Cys262 acts as the Nucleophile in catalysis. Residue Glu359 participates in NADP(+) binding.

The protein belongs to the aldehyde dehydrogenase family.

The enzyme catalyses succinate semialdehyde + NADP(+) + H2O = succinate + NADPH + 2 H(+). The protein operates within amino-acid degradation; 4-aminobutanoate degradation. Its function is as follows. Catalyzes the NADP(+) dependent oxidation of succinate semialdehyde to succinate. The polypeptide is Probable succinate-semialdehyde dehydrogenase [NADP(+)] (gabD) (Synechocystis sp. (strain ATCC 27184 / PCC 6803 / Kazusa)).